The following is a 224-amino-acid chain: Urease accessory protein UreG (224 aa).

Residues 1-20 (MATHSHPHSHTVPARPRRVR) show a composition bias toward basic residues. The tract at residues 1-25 (MATHSHPHSHTVPARPRRVRKPGEP) is disordered. 32-39 (GPVGSGKT) lines the GTP pocket.

Belongs to the SIMIBI class G3E GTPase family. UreG subfamily. In terms of assembly, homodimer. UreD, UreF and UreG form a complex that acts as a GTP-hydrolysis-dependent molecular chaperone, activating the urease apoprotein by helping to assemble the nickel containing metallocenter of UreC. The UreE protein probably delivers the nickel.

It localises to the cytoplasm. Functionally, facilitates the functional incorporation of the urease nickel metallocenter. This process requires GTP hydrolysis, probably effectuated by UreG. This is Urease accessory protein UreG from Mycobacterium bovis (strain ATCC BAA-935 / AF2122/97).